Consider the following 350-residue polypeptide: Phenylalanine--tRNA ligase alpha subunit (350 aa).

Glu271 contributes to the Mg(2+) binding site.

Belongs to the class-II aminoacyl-tRNA synthetase family. Phe-tRNA synthetase alpha subunit type 1 subfamily. As to quaternary structure, tetramer of two alpha and two beta subunits. The cofactor is Mg(2+).

It localises to the cytoplasm. It catalyses the reaction tRNA(Phe) + L-phenylalanine + ATP = L-phenylalanyl-tRNA(Phe) + AMP + diphosphate + H(+). This chain is Phenylalanine--tRNA ligase alpha subunit, found in Verminephrobacter eiseniae (strain EF01-2).